A 443-amino-acid chain; its full sequence is Carbohydrate sulfotransferase 9 (443 aa).

The Cytoplasmic segment spans residues 1-12 (MQPSEMVMNPKQ). Residues 13–33 (VFLSVLIFGVAGLLLFMYLQV) form a helical; Signal-anchor for type II membrane protein membrane-spanning segment. Residues 34–443 (WIEEQHTGRV…LMFNYTTPFL (410 aa)) are Lumenal-facing. Polar residues predominate over residues 108–128 (LTKTSHSQGGDQALSKSTGSP). Residues 108–132 (LTKTSHSQGGDQALSKSTGSPTEKL) are disordered. Residue asparagine 159 is glycosylated (N-linked (GlcNAc...) asparagine). 220–226 (PKAGCSN) contacts 3'-phosphoadenylyl sulfate. N-linked (GlcNAc...) asparagine glycosylation occurs at asparagine 243. 280–288 (RDPMERLVS) serves as a coordination point for 3'-phosphoadenylyl sulfate. N-linked (GlcNAc...) asparagine glycosylation is found at asparagine 324 and asparagine 437.

The protein belongs to the sulfotransferase 2 family. As to expression, highly expressed in trachea. Also expressed in fetal lung, adult pancreas, testis and salivary gland. Expressed at low level in pituitary gland, apex of the heart, adult lung, prostate and mammary gland. Weakly or not expressed in heart, liver and spinal cord.

It is found in the golgi apparatus membrane. Its subcellular location is the secreted. In terms of biological role, catalyzes the transfer of sulfate to position 4 of non-reducing N-acetylgalactosamine (GalNAc) residues in both N-glycans and O-glycans. Participates in biosynthesis of glycoprotein hormones lutropin and thyrotropin, by mediating sulfation of their carbohydrate structures. Has a higher activity toward carbonic anhydrase VI than toward lutropin. Only active against terminal GalNAcbeta1,GalNAcbeta. Isoform 2, but not isoform 1, is active toward chondroitin. This is Carbohydrate sulfotransferase 9 (CHST9) from Homo sapiens (Human).